The sequence spans 435 residues: Zinc finger CCCH domain-containing protein 16 (435 aa).

A C3H1-type zinc finger spans residues 1 to 27 (MRKELCRNFQRGSCRYGENCRFLHPQQ). The 6 X 2 AA repeats of F-G stretch occupies residues 2-88 (RKELCRNFQR…ASTPTGGGAA (87 aa)). Disordered regions lie at residues 25-105 (PQQA…DHKC) and 205-374 (TPSI…SQNN). 2 repeat units span residues 34 to 35 (FG) and 36 to 37 (FG). Low complexity predominate over residues 39 to 51 (QNQQQQQQQQQQN). 2 repeat units span residues 56 to 57 (FG) and 58 to 59 (FG). Polar residues predominate over residues 63–77 (GGSSRPNQFQNTWSR). Residues 78–99 (TASTPTGGGAAASTQQTGKQTQ) show a composition bias toward low complexity. Polar residues-rich tracts occupy residues 205–320 (TPSI…VNTP) and 328–339 (SGFQTNPSTTFK). 2 tandem repeats follow at residues 343 to 344 (FG) and 359 to 360 (FG). Over residues 351–374 (TTPQNNNIFGQSTPTPATNTSQNN) the composition is skewed to polar residues.

Part of the nuclear pore complex (NPC). The NPC has an eight-fold symmetrical structure comprising a central transport channel and two rings, the cytoplasmic and nuclear rings, to which eight filaments are attached. The cytoplasmic filaments have loose ends, while the nuclear filaments are joined in a distal ring, forming a nuclear basket. NPCs are highly dynamic in configuration and composition, and can be devided in 3 subcomplexes, the NUP62 subcomplex, the NUP107-160 subcomplex and the NUP93 subcomplex, containing approximately 30 different nucleoporin proteins.

The protein resides in the nucleus envelope. The protein localises to the nucleus. It localises to the nuclear pore complex. This chain is Zinc finger CCCH domain-containing protein 16, found in Arabidopsis thaliana (Mouse-ear cress).